The following is a 150-amino-acid chain: UPF0178 protein PBPRA1738 (150 aa).

Belongs to the UPF0178 family.

The sequence is that of UPF0178 protein PBPRA1738 from Photobacterium profundum (strain SS9).